The following is a 317-amino-acid chain: Brain-specific serine protease 4 (317 aa).

The signal sequence occupies residues 1–32 (MVVSGAPPALGGGCLGTFTSLLLLASTAILNA). Positions 50 to 290 (VVGGEDSTDS…HRSWVEKIVQ (241 aa)) constitute a Peptidase S1 domain. The N-linked (GlcNAc...) asparagine glycan is linked to asparagine 70. Cysteine 75 and cysteine 91 are oxidised to a cystine. Active-site charge relay system residues include histidine 90 and aspartate 141. Disulfide bonds link cysteine 175–cysteine 248, cysteine 208–cysteine 227, and cysteine 238–cysteine 266. Residue serine 242 is the Charge relay system of the active site.

It belongs to the peptidase S1 family. Expressed abundantly in the epithelial cells of the airways, including trachea, esophagus and fetal lung. Scarce in adult lung. Expressed at low levels in placenta, pancreas, prostate and thyroid gland.

Its subcellular location is the secreted. In terms of biological role, preferentially cleaves the synthetic substrate H-D-Leu-Thr-Arg-pNA compared to tosyl-Gly-Pro-Arg-pNA. This chain is Brain-specific serine protease 4 (PRSS22), found in Homo sapiens (Human).